The following is a 262-amino-acid chain: Acyl-[acyl-carrier-protein]--UDP-N-acetylglucosamine O-acyltransferase (262 aa).

It belongs to the transferase hexapeptide repeat family. LpxA subfamily. In terms of assembly, homotrimer.

The protein localises to the cytoplasm. The enzyme catalyses a (3R)-hydroxyacyl-[ACP] + UDP-N-acetyl-alpha-D-glucosamine = a UDP-3-O-[(3R)-3-hydroxyacyl]-N-acetyl-alpha-D-glucosamine + holo-[ACP]. It functions in the pathway glycolipid biosynthesis; lipid IV(A) biosynthesis; lipid IV(A) from (3R)-3-hydroxytetradecanoyl-[acyl-carrier-protein] and UDP-N-acetyl-alpha-D-glucosamine: step 1/6. In terms of biological role, involved in the biosynthesis of lipid A, a phosphorylated glycolipid that anchors the lipopolysaccharide to the outer membrane of the cell. The chain is Acyl-[acyl-carrier-protein]--UDP-N-acetylglucosamine O-acyltransferase from Paraburkholderia xenovorans (strain LB400).